The sequence spans 79 residues: uncharacterized protein (79 aa).

The protein resides in the mitochondrion. This is an uncharacterized protein from Oenothera berteroana (Bertero's evening primrose).